We begin with the raw amino-acid sequence, 315 residues long: Coproporphyrin III ferrochelatase (315 aa).

Fe-coproporphyrin III contacts are provided by residues Tyr13, Arg30, 46–47 (RY), Ser54, and Tyr125. 2 residues coordinate Fe(2+): His183 and Glu264.

It belongs to the ferrochelatase family.

The protein localises to the cytoplasm. It carries out the reaction Fe-coproporphyrin III + 2 H(+) = coproporphyrin III + Fe(2+). It functions in the pathway porphyrin-containing compound metabolism; protoheme biosynthesis. Involved in coproporphyrin-dependent heme b biosynthesis. Catalyzes the insertion of ferrous iron into coproporphyrin III to form Fe-coproporphyrin III. This Anoxybacillus flavithermus (strain DSM 21510 / WK1) protein is Coproporphyrin III ferrochelatase.